The chain runs to 178 residues: Small ribosomal subunit protein uS4 (178 aa).

One can recognise an S4 RNA-binding domain in the interval 104–166 (RRLQTIVYRK…PNSPMASENH (63 aa)). Positions 158–178 (NSPMASENHPERTAAVSEENQ) are disordered.

It belongs to the universal ribosomal protein uS4 family. Part of the 30S ribosomal subunit. Contacts protein S5. The interaction surface between S4 and S5 is involved in control of translational fidelity.

One of the primary rRNA binding proteins, it binds directly to 16S rRNA where it nucleates assembly of the body of the 30S subunit. In terms of biological role, with S5 and S12 plays an important role in translational accuracy. This is Small ribosomal subunit protein uS4 from Methanococcus maripaludis (strain C5 / ATCC BAA-1333).